The chain runs to 694 residues: Elongation factor G (694 aa).

In terms of domain architecture, tr-type G spans 9–288 (DAIRNIGIMA…VIVKWLPSPL (280 aa)). GTP is bound by residues 18–25 (AHIDAGKT), 82–86 (DTPGH), and 136–139 (NKMD).

Belongs to the TRAFAC class translation factor GTPase superfamily. Classic translation factor GTPase family. EF-G/EF-2 subfamily.

It localises to the cytoplasm. In terms of biological role, catalyzes the GTP-dependent ribosomal translocation step during translation elongation. During this step, the ribosome changes from the pre-translocational (PRE) to the post-translocational (POST) state as the newly formed A-site-bound peptidyl-tRNA and P-site-bound deacylated tRNA move to the P and E sites, respectively. Catalyzes the coordinated movement of the two tRNA molecules, the mRNA and conformational changes in the ribosome. This is Elongation factor G from Chlamydia trachomatis serovar A (strain ATCC VR-571B / DSM 19440 / HAR-13).